The chain runs to 727 residues: ADP-ribosylation factor-binding protein GGA3 (727 aa).

The VHS domain occupies 16–146 (ATNPSNRQED…MLKRQGIVQS (131 aa)). 2 positions are modified to phosphoserine: serine 159 and serine 275. The GAT domain occupies 171 to 298 (DEEKSKLLAK…VINSYKTIIE (128 aa)). The unstructured hinge stretch occupies residues 299 to 597 (GQIINGEVTT…VHVPLESIKP (299 aa)). Residues 334–385 (TPSSSSPVLAPAPAPPTSGIPILPPPPQTSGPPRSRSSSQAEAPSGPDSTNN) form a disordered region. A compositionally biased stretch (pro residues) spans 343 to 363 (APAPAPPTSGIPILPPPPQTS). The segment covering 364 to 374 (GPPRSRSSSQA) has biased composition (low complexity). The short motif at 391 to 395 (DEELL) is the DXXLL element. The tract at residues 400 to 419 (SDPAPTAPKESAGNSPWHLF) is disordered. Positions 598-719 (SSALPVTAYD…TELGEVDQFP (122 aa)) constitute a GAE domain.

This sequence belongs to the GGA protein family. As to quaternary structure, monomer. Interacts with GGA1 and GGA2. Binds to clathrin and activated ARFs, such as ARF1, ARF5 and ARF6. Binds RABEP1 and RABGEF1. Interacts with the membrane proteins M6PR/CD-MPR and IGF2R/CI-MPR and the accessory proteins SYNRG, EPN4, NECAP1, NECAP2 and AFTPH/aftiphilin. Interacts with TSG101 and UBC. Interacts with ADRA2B. Interacts with NTRK1; the interaction is independent of NTRK1 activation and ubiquitination. Interacts (via VHS domain) with BACE1 (via DXXLL motif). In terms of processing, phosphorylated by CK2 and dephosphorylated by PP2A. Phosphorylation of GGA3 allows the internal DXXLL motif to bind the VHS domain and to inhibit the recognition of cargo signals. Ubiquitinated. Post-translationally, proteolytically cleaved during apoptosis by CASP3.

Its subcellular location is the golgi apparatus. The protein resides in the trans-Golgi network membrane. It localises to the endosome membrane. The protein localises to the early endosome membrane. It is found in the recycling endosome membrane. Its function is as follows. Plays a role in protein sorting and trafficking between the trans-Golgi network (TGN) and endosomes. Mediates the ARF-dependent recruitment of clathrin to the TGN and binds ubiquitinated proteins and membrane cargo molecules with a cytosolic acidic cluster-dileucine (DXXLL) motif. Mediates export of the GPCR receptor ADRA2B to the cell surface. Involved in BACE1 transport and sorting as well as regulation of BACE1 protein levels. Regulates retrograde transport of BACE1 from endosomes to the trans-Golgi network via interaction through the VHS motif and dependent of BACE1 phosphorylation. Modulates BACE1 protein levels independently of the interaction between VHS domain and DXXLL motif through recognition of ubiquitination. Key player in a novel DXXLL-mediated endosomal sorting machinery to the recycling pathway that targets NTRK1 to the plasma membrane. This chain is ADP-ribosylation factor-binding protein GGA3, found in Rattus norvegicus (Rat).